The chain runs to 646 residues: RNase E specificity factor CsrD (646 aa).

The next 2 helical transmembrane spans lie at 10-30 (FVTL…SLSF) and 135-155 (MTTA…FLAV). Residues 152–219 (FLAVRWLQRQ…REQHSRLDTL (68 aa)) are HAMP-like. A coiled-coil region spans residues 194–224 (RTSSALDTLLREIQNAREQHSRLDTLIRSYA). Residues 254 to 387 (THGIVMMIRL…GGNSWAIYDD (134 aa)) enclose the GGDEF domain. Residues 396–644 (NVRWRTLIEQ…TNVKKYSQRY (249 aa)) form the EAL domain.

The protein resides in the cell membrane. Serves as a specificity factor required for RNase E-mediated decay of the small global regulatory RNAs CsrB and CsrC, it is probably not a nuclease. Nor does its activity involve c-di-GMP, despite its domain composition. Positively modulates motility gene expression, is also required for curli expression. This Escherichia coli (strain K12) protein is RNase E specificity factor CsrD (csrD).